Reading from the N-terminus, the 334-residue chain is Protein NlpD/LppB homolog (334 aa).

In terms of domain architecture, LysM spans 89–133 (IFYIVKSKDTMYSIAKNSGYNYHELSKFNSIKKPYKIIIGQKIWM).

It belongs to the E.coli NlpD/Haemophilus LppB family.

This is Protein NlpD/LppB homolog from Buchnera aphidicola subsp. Acyrthosiphon pisum (strain APS) (Acyrthosiphon pisum symbiotic bacterium).